Reading from the N-terminus, the 347-residue chain is 5-formaminoimidazole-4-carboxamide-1-(beta)-D-ribofuranosyl 5'-monophosphate synthetase (347 aa).

Residues His23 and Ser91 each coordinate 5-amino-1-(5-phospho-beta-D-ribosyl)imidazole-4-carboxamide. In terms of domain architecture, ATP-grasp spans 112-323; sequence RKILLWESDQ…YSYLYWDEPM (212 aa). ATP is bound by residues 142 to 196 and Glu218; that span reads PDEV…VPAY. Residue Asn244 participates in 5-amino-1-(5-phospho-beta-D-ribosyl)imidazole-4-carboxamide binding. Mg(2+) is bound by residues Glu283 and Glu296.

It belongs to the phosphohexose mutase family. It depends on Mg(2+) as a cofactor. The cofactor is Mn(2+).

It carries out the reaction 5-amino-1-(5-phospho-beta-D-ribosyl)imidazole-4-carboxamide + formate + ATP = 5-formamido-1-(5-phospho-D-ribosyl)imidazole-4-carboxamide + ADP + phosphate. The protein operates within purine metabolism; IMP biosynthesis via de novo pathway; 5-formamido-1-(5-phospho-D-ribosyl)imidazole-4-carboxamide from 5-amino-1-(5-phospho-D-ribosyl)imidazole-4-carboxamide (formate route): step 1/1. Functionally, catalyzes the ATP- and formate-dependent formylation of 5-aminoimidazole-4-carboxamide-1-beta-d-ribofuranosyl 5'-monophosphate (AICAR) to 5-formaminoimidazole-4-carboxamide-1-beta-d-ribofuranosyl 5'-monophosphate (FAICAR) in the absence of folates. The sequence is that of 5-formaminoimidazole-4-carboxamide-1-(beta)-D-ribofuranosyl 5'-monophosphate synthetase from Ignicoccus hospitalis (strain KIN4/I / DSM 18386 / JCM 14125).